Consider the following 278-residue polypeptide: Small ribosomal subunit biogenesis GTPase RsgA (278 aa).

In terms of domain architecture, CP-type G spans 62–218 (KNELTRPRVA…ICDTPGFNVI (157 aa)). GTP is bound by residues 112 to 115 (TKTD) and 162 to 170 (GQSGVGKSS). Residues Cys-241, Cys-246, His-248, and Cys-254 each coordinate Zn(2+).

This sequence belongs to the TRAFAC class YlqF/YawG GTPase family. RsgA subfamily. Monomer. Associates with 30S ribosomal subunit, binds 16S rRNA. Zn(2+) serves as cofactor.

It is found in the cytoplasm. Functionally, one of several proteins that assist in the late maturation steps of the functional core of the 30S ribosomal subunit. Helps release RbfA from mature subunits. May play a role in the assembly of ribosomal proteins into the subunit. Circularly permuted GTPase that catalyzes slow GTP hydrolysis, GTPase activity is stimulated by the 30S ribosomal subunit. This Mycoplasma genitalium (strain ATCC 33530 / DSM 19775 / NCTC 10195 / G37) (Mycoplasmoides genitalium) protein is Small ribosomal subunit biogenesis GTPase RsgA.